A 341-amino-acid chain; its full sequence is HMG box-containing protein C10F6.08c (341 aa).

Positions 68-77 (SEAKSREFGQ) are enriched in basic and acidic residues. 2 disordered regions span residues 68–195 (SEAK…SNAK) and 236–341 (LTEE…SSNA). 2 stretches are compositionally biased toward polar residues: residues 116–157 (DTNV…QVVQ) and 165–177 (NTDP…ITNL). A compositionally biased stretch (low complexity) spans 178 to 195 (KTESSKSSGAKKATSNAK). The segment at residues 195–263 (KITDTMLFNH…KAREARRRRS (69 aa)) is a DNA-binding region (HMG box). 2 stretches are compositionally biased toward basic and acidic residues: residues 238-256 (EEEK…EKAR) and 269-304 (KLEK…GQKE). Threonine 314 and threonine 315 each carry phosphothreonine. Position 316 is a phosphoserine (serine 316).

The protein resides in the nucleus. The chain is HMG box-containing protein C10F6.08c from Schizosaccharomyces pombe (strain 972 / ATCC 24843) (Fission yeast).